Consider the following 499-residue polypeptide: Cytochrome P450 76T24 (499 aa).

A helical membrane pass occupies residues 3–23 (VDILLSLVLAFFGWAAIYFLT). N-linked (GlcNAc...) asparagine glycans are attached at residues N55, N76, N279, and N284. Residue C442 participates in heme binding.

This sequence belongs to the cytochrome P450 family.

Its subcellular location is the membrane. This chain is Cytochrome P450 76T24, found in Catharanthus roseus (Madagascar periwinkle).